The chain runs to 87 residues: Small ribosomal subunit protein bS18 (87 aa).

This sequence belongs to the bacterial ribosomal protein bS18 family. Part of the 30S ribosomal subunit. Forms a tight heterodimer with protein bS6.

Binds as a heterodimer with protein bS6 to the central domain of the 16S rRNA, where it helps stabilize the platform of the 30S subunit. This is Small ribosomal subunit protein bS18 from Campylobacter hominis (strain ATCC BAA-381 / DSM 21671 / CCUG 45161 / LMG 19568 / NCTC 13146 / CH001A).